The chain runs to 834 residues: Taste receptor type 1 member 2 (834 aa).

Residues 1-19 (MEPRVRTVCFLFFLLRVLA) form the signal peptide. Residues 20-561 (EPAKNSDFYL…SFLEWHEAAT (542 aa)) lie on the Extracellular side of the membrane. N-linked (GlcNAc...) asparagine glycans are attached at residues Asn84, Asn292, Asn312, Asn363, Asn423, Asn482, and Asn522. A helical transmembrane segment spans residues 562 to 582 (IAVALLAALGFLSTLAILVIF). Residues 583 to 597 (WRHFETPMVRSAGGP) lie on the Cytoplasmic side of the membrane. Residues 598-618 (MCFLMLTLLLVAYMVVPVYVG) traverse the membrane as a helical segment. At 619–630 (LPKVSTCLCRQA) the chain is on the extracellular side. Residues 631–651 (LFPVCFTICISCIAVRSFQIV) form a helical membrane-spanning segment. Residues 652-676 (CVFKMASRFPRAYSYWVRYQGSYVS) are Cytoplasmic-facing. A helical membrane pass occupies residues 677 to 697 (VAFITALKMVTVVISLLATGL). Residues 698-722 (NPTTRTDTDDPKIMIISCNPNYRNS) lie on the Extracellular side of the membrane. The helical transmembrane segment at 723 to 743 (LLFNTSLDLLLSVAGFSFAYM) threads the bilayer. The Cytoplasmic segment spans residues 744-755 (GKELPTNYNEAK). A helical transmembrane segment spans residues 756–776 (FITFSMTFYFTSSVSLCTFMS). The Extracellular portion of the chain corresponds to 777–779 (VYD). The chain crosses the membrane as a helical span at residues 780–800 (GVLVTIVDLLVTVFNLLAISL). Residues 801–834 (GYFGPKCYMILFYPERNTPAYFNSMIQGYTMRRD) are Cytoplasmic-facing.

This sequence belongs to the G-protein coupled receptor 3 family. TAS1R subfamily. As to quaternary structure, forms heterodimers with TAS1R3.

It localises to the cell membrane. Putative taste receptor. TAS1R2/TAS1R3 recognizes diverse natural and synthetic sweeteners. The chain is Taste receptor type 1 member 2 (TAS1R2) from Saimiri sciureus (Common squirrel monkey).